We begin with the raw amino-acid sequence, 325 residues long: Putative carboxypeptidase YocD (325 aa).

Residue Ser111 is the Nucleophile of the active site. Catalysis depends on charge relay system residues Glu228 and His296.

It belongs to the peptidase S66 family.

In Bacillus subtilis (strain 168), this protein is Putative carboxypeptidase YocD (yocD).